The following is a 122-amino-acid chain: Holo-[acyl-carrier-protein] synthase (122 aa).

Asp8 and Glu60 together coordinate Mg(2+).

Belongs to the P-Pant transferase superfamily. AcpS family. Requires Mg(2+) as cofactor.

Its subcellular location is the cytoplasm. The enzyme catalyses apo-[ACP] + CoA = holo-[ACP] + adenosine 3',5'-bisphosphate + H(+). In terms of biological role, transfers the 4'-phosphopantetheine moiety from coenzyme A to a Ser of acyl-carrier-protein. The protein is Holo-[acyl-carrier-protein] synthase of Anaplasma phagocytophilum (strain HZ).